Consider the following 124-residue polypeptide: Small ribosomal subunit protein uS12 (124 aa).

The disordered stretch occupies residues 105-124 (SGVNDRRQGRSKYGAKRPKS). Residues 113–124 (GRSKYGAKRPKS) are compositionally biased toward basic residues.

This sequence belongs to the universal ribosomal protein uS12 family. Part of the 30S ribosomal subunit. Contacts proteins S8 and S17. May interact with IF1 in the 30S initiation complex.

In terms of biological role, with S4 and S5 plays an important role in translational accuracy. Its function is as follows. Interacts with and stabilizes bases of the 16S rRNA that are involved in tRNA selection in the A site and with the mRNA backbone. Located at the interface of the 30S and 50S subunits, it traverses the body of the 30S subunit contacting proteins on the other side and probably holding the rRNA structure together. The combined cluster of proteins S8, S12 and S17 appears to hold together the shoulder and platform of the 30S subunit. The protein is Small ribosomal subunit protein uS12 of Idiomarina loihiensis (strain ATCC BAA-735 / DSM 15497 / L2-TR).